The chain runs to 441 residues: Peroxisomal multifunctional enzyme A (441 aa).

Residues 1–302 (MALNFKDKVV…VNSKPADGES (302 aa)) are 3-hydroxyacyl-CoA dehydrogenase. NAD(+)-binding positions include 11 to 35 (IVTGAGGGIGKVYALEFAKRGAKVV), Ile19, Asp38, 73 to 74 (SV), and Asn97. Ser149 lines the substrate pocket. Tyr162 functions as the Proton acceptor in the catalytic mechanism. Residues 162–166 (YGSMK) and 194–197 (AASR) contribute to the NAD(+) site. An SCP2 domain is found at 331-440 (ASKIFTTIQG…KLGALMQGSK (110 aa)). A substrate-binding site is contributed by Gln412.

The protein belongs to the short-chain dehydrogenases/reductases (SDR) family.

It localises to the peroxisome. It carries out the reaction a (3S)-3-hydroxyacyl-CoA + NAD(+) = a 3-oxoacyl-CoA + NADH + H(+). The protein operates within lipid metabolism; fatty acid beta-oxidation. Functionally, enzyme acting on the peroxisomal beta-oxidation pathway for fatty acids. Protects the cells from the increase of the harmful xenobiotic fatty acids incorporated from their diets and optimizes cellular lipid composition for proper development. This is Peroxisomal multifunctional enzyme A (mfeA) from Dictyostelium discoideum (Social amoeba).